The chain runs to 413 residues: Multifunctional CCA protein (413 aa).

Positions 8 and 11 each coordinate ATP. CTP contacts are provided by G8 and R11. Mg(2+)-binding residues include D21 and D23. R91, R143, and R146 together coordinate ATP. The CTP site is built by R91, R143, and R146. The 102-residue stretch at 232–333 (TGVHVMMVVD…VRLFERSDAL (102 aa)) folds into the HD domain.

The protein belongs to the tRNA nucleotidyltransferase/poly(A) polymerase family. Bacterial CCA-adding enzyme type 1 subfamily. Monomer. Can also form homodimers and oligomers. Mg(2+) serves as cofactor. The cofactor is Ni(2+).

The enzyme catalyses a tRNA precursor + 2 CTP + ATP = a tRNA with a 3' CCA end + 3 diphosphate. It catalyses the reaction a tRNA with a 3' CCA end + 2 CTP + ATP = a tRNA with a 3' CCACCA end + 3 diphosphate. Its function is as follows. Catalyzes the addition and repair of the essential 3'-terminal CCA sequence in tRNAs without using a nucleic acid template. Adds these three nucleotides in the order of C, C, and A to the tRNA nucleotide-73, using CTP and ATP as substrates and producing inorganic pyrophosphate. tRNA 3'-terminal CCA addition is required both for tRNA processing and repair. Also involved in tRNA surveillance by mediating tandem CCA addition to generate a CCACCA at the 3' terminus of unstable tRNAs. While stable tRNAs receive only 3'-terminal CCA, unstable tRNAs are marked with CCACCA and rapidly degraded. The protein is Multifunctional CCA protein of Burkholderia cenocepacia (strain HI2424).